The chain runs to 423 residues: Histone deacetylase 14, chloroplastic (423 aa).

A chloroplast-targeting transit peptide spans 1-44; it reads MSMALIVRPFFVPGSAGISGSRNICKKNQWRKYLLKPSGSSINC. A histone deacetylase region spans residues 62–392; the sequence is DARLIYSVSA…FRALLGEDSL (331 aa). His202 serves as the catalytic Proton donor/acceptor. Residues Asp239, His241, and Asp326 each contribute to the Zn(2+) site.

The protein belongs to the histone deacetylase family. Interacts with PP2A2. Zn(2+) serves as cofactor. As to expression, expressed in stems, leaves, flowers, siliques and mature seeds.

The protein resides in the nucleus. Its subcellular location is the cytoplasm. It localises to the plastid. The protein localises to the chloroplast stroma. It is found in the mitochondrion. It carries out the reaction N-acetylserotonin + H2O = serotonin + acetate. It catalyses the reaction N-acetyltyramine + H2O = tyramine + acetate. The enzyme catalyses N-acetyltryptamine + H2O = tryptamine + acetate. The catalysed reaction is melatonin + H2O = 5-methoxytryptamine + acetate. Its activity is inhibited by trichostatin A (TSA), a known histone deacetylase inhibitor. Functionally, regulates lysine acetylation levels of plastid proteins related to photosynthesis. Involved in the regulation of the activation state of RuBisCO, which is controlled by lysine acetylation of RuBisCO activase under low-light conditions. Associates with alpha- and beta-tubulins and deacetylate alpha-tubulin. Does not seem to be required for the cellular patterning in the root epidermis. Involved in the regulation of melatonin biosynthesis by catalyzing the deacetylation of N-acetylserotonin to produce serotonin. N-acetylserotonin is methylated by acetylserotonin O-methyltransferase (ASMT) to produce melatonin (N-acetyl-5-methoxytryptamine). Deacetylates melatonin to produce 5-methoxytryptamine. In vitro, deacetylates N-acetyltyramine and N-acetyltryptamine to produce tyramine and tryptamine, respectively. The chain is Histone deacetylase 14, chloroplastic from Arabidopsis thaliana (Mouse-ear cress).